Reading from the N-terminus, the 243-residue chain is 1-(5-phosphoribosyl)-5-[(5-phosphoribosylamino)methylideneamino] imidazole-4-carboxamide isomerase (243 aa).

The active-site Proton acceptor is Asp-10. Asp-129 serves as the catalytic Proton donor.

This sequence belongs to the HisA/HisF family.

It localises to the cytoplasm. It carries out the reaction 1-(5-phospho-beta-D-ribosyl)-5-[(5-phospho-beta-D-ribosylamino)methylideneamino]imidazole-4-carboxamide = 5-[(5-phospho-1-deoxy-D-ribulos-1-ylimino)methylamino]-1-(5-phospho-beta-D-ribosyl)imidazole-4-carboxamide. It functions in the pathway amino-acid biosynthesis; L-histidine biosynthesis; L-histidine from 5-phospho-alpha-D-ribose 1-diphosphate: step 4/9. This chain is 1-(5-phosphoribosyl)-5-[(5-phosphoribosylamino)methylideneamino] imidazole-4-carboxamide isomerase, found in Nocardia farcinica (strain IFM 10152).